Reading from the N-terminus, the 1116-residue chain is MESPLIYVSVLLLNIFEFSSGIVYNKDDTEKRFACSNKGFPQENEIIKLYLFLENLKIQCFFQTENEIASKAMLSVFTSGGLAPSLGIMNSTYNGIFHFNLTLFSDRILWLVDIPRENITQSTDIAAVEEWLVRITLHHGLNIYATEGTLLDVIREPILQWTPGDVIPESEISKLYPHVVDLKVTKCPCANDVALLGFIVDTIVDGVYIGITFGGFWHDYDTTWFNMTQTIYSQLQEEYEDLSLVDMVLTNHFLVILTSLGLFVSEDLRYPSRHSLSFSRADFCGFERVDYVKGKLWYNERCFANREHFEVDYVTVTFERNRTLSESSSCFYSQEPFLEWVPCLPHIFKGIKIFPTVLTFLVDQERGTGVYLFYNKVRKTAIASVSTLRNNEPNSQSKFPIFRFPSSFSSPVGMVFHPRSHFLYAYGNQIWLSVDGGNTFQLIANFHDDIIKKTFHSFYTSAITFVSQRGKVYSTKAGMGRYSAVGSVTERIFTLYYDHLGFLHKLTLGRFEASGPPTAFGNSRNLFGQPPDMGFETALAPQHTSLDEIIFFAYVPENEPQETIYSKKFGNIHYGKVIHSGKTGRAYIRKVLQHTTPKGFLSSVIAEMKEPFGLEEVNESSCLSSSLLINKAGNVYKLTLDSQVVQALFEDTDIEKTVVLPGYSSFLITSILDNKNALAIATMPESAPNNMTFLKSTWFLYNFGQRNGRTWKIYSKPCNYWFQHDDSPSLNIVKYIDLGNSYVLKAKVIRNAKGFRMLEIPLLTVFVGNPNLLEVTAEVTFDDTDSYVITISAASKVLHQGSTSLAFIMWSASTECFVTTMVPTLKSSCSYLRSMHHIPSKFIPFEDWISGVHKDSQGFNLIKTLPINYRPPSNMGIAIPLTDNFYHADPSKPIPRNMFHMSKKTGKFKQCANVSTREECNCTKDQKFSHAVAFSDCREKVPRFKFPITQYPVSLEIINEDGRVPLQSPYLVTVTEVNMRHNWKLKHTVPENIKRMKQLVEPILGAAVYNPSGLNLSIKGSELFHFRVTVISGVTFCNLIEEFQIYVDEAPLPFPGHTLIAVATAVVLGGLIFIAFMFQLQGIHPWRTFQRWIRRNQEKFSSISLSELIHRSKSEE.

The Extracellular segment spans residues 1–1053 (MESPLIYVSV…QIYVDEAPLP (1053 aa)). Residues C35 and C60 are joined by a disulfide bond. N-linked (GlcNAc...) asparagine glycosylation is found at N90, N100, N118, N226, and N321. C189 and C302 are joined by a disulfide. A disulfide bridge links C330 with C343. N-linked (GlcNAc...) asparagine glycosylation is found at N618 and N690. 4 disulfide bridges follow: C718–C816, C829–C1037, C911–C920, and C922–C937. 2 N-linked (GlcNAc...) asparagine glycosylation sites follow: N913 and N921. 2 N-linked (GlcNAc...) asparagine glycosylation sites follow: N1010 and N1015. A helical membrane pass occupies residues 1054–1076 (FPGHTLIAVATAVVLGGLIFIAF). The Cytoplasmic segment spans residues 1077-1116 (MFQLQGIHPWRTFQRWIRRNQEKFSSISLSELIHRSKSEE).

As to quaternary structure, component of the CatSper complex or CatSpermasome composed of the core pore-forming members CATSPER1, CATSPER2, CATSPER3 and CATSPER4 as well as auxiliary members CATSPERB, CATSPERG, CATSPERD, CATSPERE, CATSPERZ, C2CD6/CATSPERT, TMEM249, TMEM262 and EFCAB9. HSPA1 may be an additional auxiliary complex member. The core complex members CATSPER1, CATSPER2, CATSPER3 and CATSPER4 form a heterotetrameric channel. The auxiliary CATSPERB, CATSPERG, CATSPERD and CATSPERE subunits form a pavilion-like structure over the pore which stabilizes the complex through interactions with CATSPER4, CATSPER3, CATSPER1 and CATSPER2 respectively. TMEM262/CATSPERH interacts with CATSPERB, further stabilizing the complex. C2CD6/CATSPERT interacts at least with CATSPERD and is required for targeting the CatSper complex in the flagellar membrane.

It localises to the cell projection. The protein localises to the cilium. The protein resides in the flagellum membrane. Auxiliary component of the CatSper complex, a complex involved in sperm cell hyperactivation. Sperm cell hyperactivation is needed for sperm motility which is essential late in the preparation of sperm for fertilization. The protein is Cation channel sperm-associated auxiliary subunit beta of Homo sapiens (Human).